The chain runs to 161 residues: Regulator of ribonuclease activity A (161 aa).

This sequence belongs to the RraA family. Homotrimer. Binds to both RNA-binding sites in the C-terminal region of Rne and to RhlB.

It localises to the cytoplasm. Globally modulates RNA abundance by binding to RNase E (Rne) and regulating its endonucleolytic activity. Can modulate Rne action in a substrate-dependent manner by altering the composition of the degradosome. Modulates RNA-binding and helicase activities of the degradosome. In Alteromonas mediterranea (strain DSM 17117 / CIP 110805 / LMG 28347 / Deep ecotype), this protein is Regulator of ribonuclease activity A.